The chain runs to 234 residues: HTH-type transcriptional regulator ArcR (234 aa).

40 to 129 is an a nucleoside 3',5'-cyclic phosphate binding site; the sequence is VRHYTKGQVI…MAFLCKANDD (90 aa). In terms of domain architecture, HTH crp-type spans 155-228; the sequence is KFAKDRIIKL…HKNWLVSKHL (74 aa). A DNA-binding region (H-T-H motif) is located at residues 188–207; the sequence is IQLMSDMAGISRETAGHIIH.

It is found in the cytoplasm. Its function is as follows. Positively regulates the expression of the arcABDCR operon under anaerobic conditions, thus playing an essential role in arginine catabolism. May also control the expression of genes encoding proteins which are involved in anaerobic metabolism. Can bind cyclic AMP. The polypeptide is HTH-type transcriptional regulator ArcR (arcR) (Staphylococcus aureus (strain Mu50 / ATCC 700699)).